A 344-amino-acid polypeptide reads, in one-letter code: Protein RecA (344 aa).

An ATP-binding site is contributed by 66–73 (GPESSGKT).

Belongs to the RecA family.

Its subcellular location is the cytoplasm. Its function is as follows. Can catalyze the hydrolysis of ATP in the presence of single-stranded DNA, the ATP-dependent uptake of single-stranded DNA by duplex DNA, and the ATP-dependent hybridization of homologous single-stranded DNAs. It interacts with LexA causing its activation and leading to its autocatalytic cleavage. This Methylobacillus flagellatus (strain ATCC 51484 / DSM 6875 / VKM B-1610 / KT) protein is Protein RecA.